Here is an 813-residue protein sequence, read N- to C-terminus: Calpain-7 (813 aa).

Methionine 1 bears the N-acetylmethionine mark. Threonine 95 bears the Phosphothreonine mark. A Calpain catalytic domain is found at 232 to 540 (RERFAYPMPF…YDVVYLSWNP (309 aa)). Catalysis depends on residues cysteine 290, histidine 458, and asparagine 478. The tract at residues 541 to 701 (ALFKESTCIH…INGKWSGQSA (161 aa)) is domain III. The tract at residues 702–813 (GGCGNFQETH…TVPIKTTQLQ (112 aa)) is domain N.

Belongs to the peptidase C2 family. Ubiquitous.

It localises to the nucleus. In terms of biological role, calcium-regulated non-lysosomal thiol-protease. In Mus musculus (Mouse), this protein is Calpain-7 (Capn7).